The following is an 80-amino-acid chain: Metallothionein-like protein type 2 MET1 (80 aa).

It belongs to the metallothionein superfamily. Type 15 family.

Metallothioneins have a high content of cysteine residues that bind various heavy metals. This Fragaria ananassa (Strawberry) protein is Metallothionein-like protein type 2 MET1 (MET1).